A 142-amino-acid polypeptide reads, in one-letter code: Alpha-lactalbumin (142 aa).

Residues 1-19 (MMSFVSLLLVGILFHATQA) form the signal peptide. The C-type lysozyme domain maps to 20 to 142 (EQLTKCEVFQ…KLDQWLCEKL (123 aa)). Disulfide bonds link C25–C139, C47–C130, C80–C96, and C92–C110. 2 N-linked (GlcNAc...) asparagine glycosylation sites follow: N64 and N93. Residues K98, D101, D103, D106, and D107 each coordinate Ca(2+).

The protein belongs to the glycosyl hydrolase 22 family. As to quaternary structure, lactose synthase (LS) is a heterodimer of a catalytic component, beta1,4-galactosyltransferase (beta4Gal-T1) and a regulatory component, alpha-lactalbumin (LA). As to expression, mammary gland specific. Secreted in milk.

The protein resides in the secreted. In terms of biological role, regulatory subunit of lactose synthase, changes the substrate specificity of galactosyltransferase in the mammary gland making glucose a good acceptor substrate for this enzyme. This enables LS to synthesize lactose, the major carbohydrate component of milk. In other tissues, galactosyltransferase transfers galactose onto the N-acetylglucosamine of the oligosaccharide chains in glycoproteins. This chain is Alpha-lactalbumin (LALBA), found in Ovis aries (Sheep).